Consider the following 273-residue polypeptide: Putative phosphoenolpyruvate synthase regulatory protein (273 aa).

Position 154-161 (G154–T161) interacts with ADP.

This sequence belongs to the pyruvate, phosphate/water dikinase regulatory protein family. PSRP subfamily.

The catalysed reaction is [pyruvate, water dikinase] + ADP = [pyruvate, water dikinase]-phosphate + AMP + H(+). It catalyses the reaction [pyruvate, water dikinase]-phosphate + phosphate + H(+) = [pyruvate, water dikinase] + diphosphate. Its function is as follows. Bifunctional serine/threonine kinase and phosphorylase involved in the regulation of the phosphoenolpyruvate synthase (PEPS) by catalyzing its phosphorylation/dephosphorylation. This Neisseria meningitidis serogroup C (strain 053442) protein is Putative phosphoenolpyruvate synthase regulatory protein.